Reading from the N-terminus, the 336-residue chain is Fructose-1,6-bisphosphatase class 1 (336 aa).

4 residues coordinate Mg(2+): Glu90, Asp112, Leu114, and Asp115. Substrate contacts are provided by residues Asp115–Ser118, Asn211, and Lys277. Glu283 provides a ligand contact to Mg(2+).

The protein belongs to the FBPase class 1 family. In terms of assembly, homotetramer. Mg(2+) is required as a cofactor.

It is found in the cytoplasm. The enzyme catalyses beta-D-fructose 1,6-bisphosphate + H2O = beta-D-fructose 6-phosphate + phosphate. It participates in carbohydrate biosynthesis; gluconeogenesis. This Pseudomonas aeruginosa (strain UCBPP-PA14) protein is Fructose-1,6-bisphosphatase class 1.